We begin with the raw amino-acid sequence, 178 residues long: Germinal center-associated signaling and motility protein (178 aa).

The residue at position 99 (Ser-99) is a Phosphoserine. Tyr-148 carries the post-translational modification Phosphotyrosine.

As to quaternary structure, interacts with ACTB and MYH2; the interaction with MYH2 is increased by IL6-induced phosphorylation. Interacts (via C-terminus) with ARHGEF11 (via DH domain). Interacts with ARHGEF12. Interacts with SYK; the interaction increases after B-cell receptor stimulation, resulting in enhanced SYK autophosphorylation and activity. Phosphorylation on tyrosine residues can be induced by IL6. Phosphorylation is mediated by LYN. Post-translationally, targeted by the ubiquitin E3 ligase subunit FBXO10 to mediate its ubiquitination and degradation. In terms of tissue distribution, expressed in diffuse large B-cell lymphoma (DLBCL) and several germinal center (GC)-like lymphoma cell lines (at protein level). Highly expressed in normal GC lymphocytes and GC-derived malignancies. Expressed in thymus and spleen.

The protein localises to the cytoplasm. It localises to the cell membrane. Its function is as follows. Involved in the negative regulation of lymphocyte motility. It mediates the migration-inhibitory effects of IL6. Serves as a positive regulator of the RhoA signaling pathway. Enhancement of RhoA activation results in inhibition of lymphocyte and lymphoma cell motility by activation of its downstream effector ROCK. Is a regulator of B-cell receptor signaling, that acts through SYK kinase activation. In Homo sapiens (Human), this protein is Germinal center-associated signaling and motility protein (GCSAM).